Here is a 283-residue protein sequence, read N- to C-terminus: Elongation factor Ts (283 aa).

Residues 79 to 82 (TDFV) form an involved in Mg(2+) ion dislocation from EF-Tu region.

The protein belongs to the EF-Ts family.

It localises to the cytoplasm. Associates with the EF-Tu.GDP complex and induces the exchange of GDP to GTP. It remains bound to the aminoacyl-tRNA.EF-Tu.GTP complex up to the GTP hydrolysis stage on the ribosome. This Shewanella sp. (strain ANA-3) protein is Elongation factor Ts.